The chain runs to 279 residues: Tryptophan synthase alpha chain (279 aa).

Catalysis depends on proton acceptor residues Glu-50 and Asp-61.

Belongs to the TrpA family. In terms of assembly, tetramer of two alpha and two beta chains.

The enzyme catalyses (1S,2R)-1-C-(indol-3-yl)glycerol 3-phosphate + L-serine = D-glyceraldehyde 3-phosphate + L-tryptophan + H2O. Its pathway is amino-acid biosynthesis; L-tryptophan biosynthesis; L-tryptophan from chorismate: step 5/5. Functionally, the alpha subunit is responsible for the aldol cleavage of indoleglycerol phosphate to indole and glyceraldehyde 3-phosphate. The sequence is that of Tryptophan synthase alpha chain from Brucella suis (strain ATCC 23445 / NCTC 10510).